Consider the following 1106-residue polypeptide: MFNSMTPPPISSYGEPCCLRPLPSQGAPSVGTEGLSGPPFCHQANLMSGPHSYGPARETNSCTEGPLFSSPRSAVKLTKKRALSISPLSDASLDLQTVIRTSPSSLVAFINSRCTSPGGSYGHLSIGTMSPSLGFPAQMNHQKGPSPSFGVQPCGPHDSARGGMIPHPQSRGPFPTCQLKSELDMLVGKCREEPLEGDMSSPNSTGIQDPLLGMLDGREDLEREEKREPESVYETDCRWDGCSQEFDSQEQLVHHINSEHIHGERKEFVCHWGGCSRELRPFKAQYMLVVHMRRHTGEKPHKCTFEGCRKSYSRLENLKTHLRSHTGEKPYMCEHEGCSKAFSNASDRAKHQNRTHSNEKPYVCKLPGCTKRYTDPSSLRKHVKTVHGPDAHVTKRHRGDGPLPRAPSISTVEPKREREGGPIREESRLTVPEGAMKPQPSPGAQSSCSSDHSPAGSAANTDSGVEMTGNAGGSTEDLSSLDEGPCIAGTGLSTLRRLENLRLDQLHQLRPIGTRGLKLPSLSHTGTTVSRRVGPPVSLERRSSSSSSISSAYTVSRRSSLASPFPPGSPPENGASSLPGLMPAQHYLLRARYASARGGGTSPTAASSLDRIGGLPMPPWRSRAEYPGYNPNAGVTRRASDPAQAADRPAPARVQRFKSLGCVHTPPTVAGGGQNFDPYLPTSVYSPQPPSITENAAMDARGLQEEPEVGTSMVGSGLNPYMDFPPTDTLGYGGPEGAAAEPYGARGPGSLPLGPGPPTNYGPNPCPQQASYPDPTQETWGEFPSHSGLYPGPKALGGTYSQCPRLEHYGQVQVKPEQGCPVGSDSTGLAPCLNAHPSEGPPHPQPLFSHYPQPSPPQYLQSGPYTQPPPDYLPSEPRPCLDFDSPTHSTGQLKAQLVCNYVQSQQELLWEGGGREDAPAQEPSYQSPKFLGGSQVSPSRAKAPVNTYGPGFGPNLPNHKSGSYPTPSPCHENFVVGANRASHRAAAPPRLLPPLPTCYGPLKVGGTNPSCGHPEVGRLGGGPALYPPPEGQVCNPLDSLDLDNTQLDFVAILDEPQGLSPPPSHDQRGSSGHTPPPSGPPNMAVGNMSVLLRSLPGETEFLNSSA.

The interval 1–20 (MFNSMTPPPISSYGEPCCLR) is SNAG domain. An interaction with SUFU region spans residues 120-124 (SYGHL). 5 C2H2-type zinc fingers span residues 235-260 (TDCR…NSEH), 268-295 (FVCH…MRRH), 301-325 (HKCT…LRSH), 331-356 (YMCE…NRTH), and 362-387 (YVCK…KTVH). The interval 283-291 (KAQYMLVVH) is interaction with DNA. Interaction with DNA stretches follow at residues 345 to 350 (ASDRAK) and 375 to 381 (DPSSLRK). 5 disordered regions span residues 375–485 (DPSS…DEGP), 516–580 (GLKL…SLPG), 732–792 (YGGP…LYPG), 817–889 (EQGC…PTHS), and 914–942 (GRED…SRAK). Positions 413–428 (EPKREREGGPIREESR) are enriched in basic and acidic residues. Over residues 442-463 (PGAQSSCSSDHSPAGSAANTDS) the composition is skewed to polar residues. The residue at position 518 (lysine 518) is an N6-acetyllysine. 2 stretches are compositionally biased toward low complexity: residues 544–560 (SSSS…RRSS) and 737–753 (GAAA…SLPL). Positions 754–766 (GPGPPTNYGPNPC) are enriched in pro residues. Residues 768-779 (QQASYPDPTQET) are compositionally biased toward polar residues. A Glycyl lysine isopeptide (Lys-Gly) (interchain with G-Cter in SUMO2) cross-link involves residue lysine 1003. The tract at residues 1054–1087 (DEPQGLSPPPSHDQRGSSGHTPPPSGPPNMAVGN) is disordered.

It belongs to the GLI C2H2-type zinc-finger protein family. Interacts with KIF7. Interacts with STK36. Interacts with ZIC1; the interaction enhances transcription activation. Interacts with SUFU; this inhibits transcriptional activation by GLI1. Post-translationally, phosphorylated in vitro by ULK3. Acetylation at Lys-518 down-regulates transcriptional activity. Deacetylated by HDAC1. In terms of processing, ubiquitinated by the CRL2(FEM1B) complex, suppressing GLI1 transcriptional activator activity. Detected in testis (at protein level). Testis, myometrium and fallopian tube. Also expressed in the brain with highest expression in the cerebellum, optic nerve and olfactory tract. Isoform 1 is detected in brain, spleen, pancreas, liver, kidney and placenta; isoform 2 is not detectable in these tissues.

The protein resides in the cytoplasm. The protein localises to the nucleus. Functionally, acts as a transcriptional activator. Binds to the DNA consensus sequence 5'-GACCACCCA-3'. Regulates the transcription of specific genes during normal development. Plays a role in craniofacial development and digital development, as well as development of the central nervous system and gastrointestinal tract. Mediates SHH signaling. Plays a role in cell proliferation and differentiation via its role in SHH signaling. Acts as a transcriptional activator, but activates a different set of genes than isoform 1. Activates expression of CD24, unlike isoform 1. Mediates SHH signaling. Promotes cancer cell migration. In Homo sapiens (Human), this protein is Zinc finger protein GLI1 (GLI1).